A 92-amino-acid chain; its full sequence is Small ribosomal subunit protein bS20 (92 aa).

Belongs to the bacterial ribosomal protein bS20 family.

Functionally, binds directly to 16S ribosomal RNA. The protein is Small ribosomal subunit protein bS20 of Rickettsia africae (strain ESF-5).